The chain runs to 432 residues: Sphingosine N-acyltransferase-like protein ALT7 (432 aa).

The helical transmembrane segment at 55–75 (IGLSLGSLLLLILMFTCLPYY) threads the bilayer. Asn-77 carries N-linked (GlcNAc...) asparagine glycosylation. The next 7 helical transmembrane spans lie at 91–111 (FIFSGVVLFTALRAISMIYLL), 128–148 (FTEQGWLVIHHSLFWTTGMYI), 172–192 (GLTKGYYLLQLAFWLQQIVVV), 226–246 (VGNVILCLVDIVDVLFAFAKL), 250–270 (LGFQYACDVAFCVFLASWLVA), 273–293 (GLYLLVCWSIFTILPTVMPYG), and 338–358 (AFLGLLVGLQVLMLIWLGMIL). The region spanning 123 to 366 (KLMVRFTEQG…ILKVAYKVFQ (244 aa)) is the TLC domain. The interval 370–395 (ADDTRSDSEESGYGTSDHEGDCYGAQ) is disordered.

This sequence belongs to the sphingosine N-acyltransferase family.

It localises to the membrane. It functions in the pathway mycotoxin biosynthesis. Its function is as follows. Sphingosine N-acyltransferase-like protein; part of the gene cluster that mediates the biosynthesis of the host-selective toxins (HSTs) AAL-toxins, sphinganine-analog mycotoxins responsible for Alternaria stem canker on tomato by the tomato pathotype. The biosynthesis starts with the polyketide synthase ALT1-catalyzed C-16 carbon chain assembly from one starter acetyl-CoA unit with malonyl-CoA extender units. ALT1 also selectively transfers methyl groups at the first and the third cycle of chain elongation for AAL toxin. The C-16 polyketide chain is released from the enzyme by a nucleophilic attack of a carbanion, which is derived from R-carbon of glycin by decarboxylation, on the carbonyl carbon of polyketide acyl chain. This step is probably catalyzed by a pyridoxal 5'-phosphate-dependent aminoacyl transferase ALT4. The respective functions of the other enzymes encoded by the cluster have still to be elucidated. The sphingosine N-acyltransferase-like protein ALT7 seems not to act as a resistance/self-tolerance factor against the toxin in the toxin biosynthetic gene cluster, contrary to what is expected. The protein is Sphingosine N-acyltransferase-like protein ALT7 of Alternaria alternata (Alternaria rot fungus).